A 98-amino-acid chain; its full sequence is NADH-ubiquinone oxidoreductase chain 4L (98 aa).

3 helical membrane passes run 1-21, 29-49, and 61-81; these read MSLT…GLLM, SLLC…MTIL, and IILL…LVMV.

The protein belongs to the complex I subunit 4L family. As to quaternary structure, core subunit of respiratory chain NADH dehydrogenase (Complex I) which is composed of 45 different subunits.

The protein localises to the mitochondrion inner membrane. It catalyses the reaction a ubiquinone + NADH + 5 H(+)(in) = a ubiquinol + NAD(+) + 4 H(+)(out). Core subunit of the mitochondrial membrane respiratory chain NADH dehydrogenase (Complex I) which catalyzes electron transfer from NADH through the respiratory chain, using ubiquinone as an electron acceptor. Part of the enzyme membrane arm which is embedded in the lipid bilayer and involved in proton translocation. The chain is NADH-ubiquinone oxidoreductase chain 4L (MT-ND4L) from Stenoderma rufum (Red fruit bat).